A 1186-amino-acid polypeptide reads, in one-letter code: Pumilio homolog 1 (1186 aa).

Ser-2 bears the N-acetylserine mark. Position 19 is a phosphoserine (Ser-19). Residues 22 to 73 (LKHHPQEPANPNMPVVLTSGTGSQAQPQPAANQALAAGTHSSPVPGSIGVAG) form a disordered region. A compositionally biased stretch (low complexity) spans 45–58 (QAQPQPAANQALAA). Residues Ser-75, Ser-98, and Ser-106 each carry the phosphoserine modification. Thr-112 is modified (phosphothreonine). A phosphoserine mark is found at Ser-124, Ser-159, Ser-197, Ser-209, and Ser-229. Positions 233–272 (SCLRKGGFGPRDADSDENDKGEKKNKGTFDGDKLGDLKEE) are disordered. The segment covering 250-272 (NDKGEKKNKGTFDGDKLGDLKEE) has biased composition (basic and acidic residues). A Phosphoserine modification is found at Ser-305. Low complexity predominate over residues 485 to 502 (TNSANQQTTPQAQQGQQQ). 2 disordered regions span residues 485-524 (TNSANQQTTPQAQQGQQQVLRGGASQRPLTPNQNQQGQQT) and 613-648 (AGTTNGPFRPLGTQQPQPQPQQQPNNNLASSSFYGN). The span at 511–524 (RPLTPNQNQQGQQT) shows a compositional bias: polar residues. Thr-514 is modified (phosphothreonine). The span at 626-639 (QQPQPQPQQQPNNN) shows a compositional bias: low complexity. Phosphoserine is present on residues Ser-709 and Ser-714. Residues 742–773 (GPVGMPLPSQGPGHSQTPPPSLSSHGSSSSLN) are disordered. Over residues 763-773 (LSSHGSSSSLN) the composition is skewed to low complexity. Arg-796 is subject to Omega-N-methylarginine. 2 positions are modified to phosphoserine: Ser-806 and Ser-822. Residues 828–1168 (GRSRLLEDFR…HILAKLEKYY (341 aa)) enclose the PUM-HD domain. Pumilio repeat units follow at residues 848–883 (EIAGHIMEFSQDQHGSRFIQLKLERATPAERQLVFN), 884–919 (EILQAAYQLMVDVFGNYVIQKFFEFGSLEQKLALAE), 920–955 (RIRGHVLSLALQMYGCRVIQKALEFIPSDQQNEMVR), 956–991 (ELDGHVLKCVKDQNGNHVVQKCIECVQPQSLQFIID), 992–1027 (AFKGQVFALSTHPYGCRVIQRILEHCLPDQTLPILE), 1028–1063 (ELHQHTEQLVQDQYGNYVIQHVLEHGRPEDKSKIVA), 1064–1099 (EIRGNVLVLSQHKFASNVVEKCVTHASRTERAVLID), and 1103–1142 (TMNDGPHSALYTMMKDQYANYVVQKMIDVAEPGQRKIVMH). The segment at 863-867 (SRFIQ) is adenine-nucleotide binding in RNA target. The uracil-nucleotide binding in RNA target stretch occupies residues 899-903 (NYVIQ). The adenine-nucleotide binding in RNA target stretch occupies residues 935–939 (CRVIQ). Residues 971–975 (NHVVQ) form a non-specific-nucleotide binding in RNA target region. The interval 1007-1011 (CRVIQ) is adenine-nucleotide binding in RNA target. Positions 1043 to 1047 (NYVIQ) are uracil-nucleotide binding in RNA target. The guanine-nucleotide binding in RNA target stretch occupies residues 1079-1083 (SNVVE). The interval 1122-1126 (NYVVQ) is uracil-nucleotide binding in RNA target.

In terms of assembly, recruits the CCR4-POP2-NOT deadenylase leading to translational inhibition and mRNA degradation. In case of viral infection, interacts with DHX58. Interacts with TRIM71 (via NHL repeats) in an RNA-dependent manner. Phosphorylation at Ser-714 promotes RNA-binding activity. Following growth factor stimulation phosphorylated at Ser-714, promoting binding to the 3'-UTR of CDKN1B/p27 mRNA. As to expression, expressed in brain, heart, kidney, muscle, intestine and stomach. Not expressed in cerebellum, corpus callosum, caudate nucleus, hippocampus, medulla oblongata and putamen. Expressed in all fetal tissues tested.

The protein resides in the cytoplasm. It is found in the P-body. It localises to the cytoplasmic granule. Its function is as follows. Sequence-specific RNA-binding protein that acts as a post-transcriptional repressor by binding the 3'-UTR of mRNA targets. Binds to an RNA consensus sequence, the Pumilio Response Element (PRE), 5'-UGUANAUA-3', that is related to the Nanos Response Element (NRE). Mediates post-transcriptional repression of transcripts via different mechanisms: acts via direct recruitment of the CCR4-POP2-NOT deadenylase leading to translational inhibition and mRNA degradation. Also mediates deadenylation-independent repression by promoting accessibility of miRNAs. Following growth factor stimulation, phosphorylated and binds to the 3'-UTR of CDKN1B/p27 mRNA, inducing a local conformational change that exposes miRNA-binding sites, promoting association of miR-221 and miR-222, efficient suppression of CDKN1B/p27 expression, and rapid entry to the cell cycle. Acts as a post-transcriptional repressor of E2F3 mRNAs by binding to its 3'-UTR and facilitating miRNA regulation. Represses a program of genes necessary to maintain genomic stability such as key mitotic, DNA repair and DNA replication factors. Its ability to repress those target mRNAs is regulated by the lncRNA NORAD (non-coding RNA activated by DNA damage) which, due to its high abundance and multitude of PUMILIO binding sites, is able to sequester a significant fraction of PUM1 and PUM2 in the cytoplasm. Involved in neuronal functions by regulating ATXN1 mRNA levels: acts by binding to the 3'-UTR of ATXN1 transcripts, leading to their down-regulation independently of the miRNA machinery. Plays a role in cytoplasmic sensing of viral infection. In testis, acts as a post-transcriptional regulator of spermatogenesis by binding to the 3'-UTR of mRNAs coding for regulators of p53/TP53. Involved in embryonic stem cell renewal by facilitating the exit from the ground state: acts by targeting mRNAs coding for naive pluripotency transcription factors and accelerates their down-regulation at the onset of differentiation. Binds specifically to miRNA MIR199A precursor, with PUM2, regulates miRNA MIR199A expression at a postranscriptional level. This Homo sapiens (Human) protein is Pumilio homolog 1.